The sequence spans 361 residues: Chorismate synthase (361 aa).

NADP(+) contacts are provided by R48 and R54. FMN contacts are provided by residues 125-127 (RSS), 238-239 (NA), G278, 293-297 (KPTSS), and R319.

Belongs to the chorismate synthase family. In terms of assembly, homotetramer. Requires FMNH2 as cofactor.

The catalysed reaction is 5-O-(1-carboxyvinyl)-3-phosphoshikimate = chorismate + phosphate. It participates in metabolic intermediate biosynthesis; chorismate biosynthesis; chorismate from D-erythrose 4-phosphate and phosphoenolpyruvate: step 7/7. In terms of biological role, catalyzes the anti-1,4-elimination of the C-3 phosphate and the C-6 proR hydrogen from 5-enolpyruvylshikimate-3-phosphate (EPSP) to yield chorismate, which is the branch point compound that serves as the starting substrate for the three terminal pathways of aromatic amino acid biosynthesis. This reaction introduces a second double bond into the aromatic ring system. The polypeptide is Chorismate synthase (Edwardsiella ictaluri (strain 93-146)).